A 558-amino-acid polypeptide reads, in one-letter code: MKDFIEWKDFTFQYDVQSEPTLKGINLSIPKGEKVLILGPSGSGKSTLGHCLNGIIPNTHKGQYSGIFTINHKNAFDLSIYDKSHLVSTVLQDPDGQFIGLTVAEDIAFALENDVVAQEEMTSIVEMWAKRLEIAPLLSKRPQDLSGGQKQRVSLAGVLVDDSPILLFDEPLANLDPQSGQDIMALVDRIHQEQDATTIIIEHRLEDVLYERVDRVVLFSDGQIIYNGEPDQLLKTNFLSEYGIREPLYISALKNLGYDFEKQNTMTSIDDFDFSELLIPKMRALDLDKHTDKLLSVQHLSVSYDLENNTLDDVSFDLYKGQRLAIVGKNGAGKSTLAKALCQFIPNNATLIYNNEDVSQDSIKERAERIGYVLQNPNQMISQAMVFDEVALGLRLRGFSDNDIESRVYDILKVCGLYQFRNWPISALSFGQKKRVTIASILILNPEVIILDEPTAGQDMKHYTEMMSFLDKLSCDGHSIVMITHDMQLMLEYTDRAIVIDNGLIAADDHPINILSNTELLKKTHLKKTSLFALADRLGISPQKLTQWYIDNQGGKNG.

ABC transporter domains are found at residues Ile-5–Glu-246 and Leu-295–Lys-527. Residues Gly-39–Ser-46 and Gly-328–Ser-335 each bind ATP.

The protein belongs to the ABC transporter superfamily.

It is found in the cell membrane. Its function is as follows. Probably part of an ABC transporter complex. Responsible for energy coupling to the transport system. The sequence is that of Putative ABC transporter ATP-binding protein gbs1680 from Streptococcus agalactiae serotype III (strain NEM316).